The primary structure comprises 82 residues: Protein costars (82 aa).

It belongs to the costars family.

Its function is as follows. Modulates actin dynamics and cell motility. The sequence is that of Protein costars (cosA) from Dictyostelium discoideum (Social amoeba).